The chain runs to 161 residues: Cyclic pyranopterin monophosphate synthase (161 aa).

Residues 75 to 77 and 115 to 116 each bind substrate; these read MCH and ME. The active site involves aspartate 130.

Belongs to the MoaC family. Homohexamer; trimer of dimers.

The catalysed reaction is (8S)-3',8-cyclo-7,8-dihydroguanosine 5'-triphosphate = cyclic pyranopterin phosphate + diphosphate. It participates in cofactor biosynthesis; molybdopterin biosynthesis. In terms of biological role, catalyzes the conversion of (8S)-3',8-cyclo-7,8-dihydroguanosine 5'-triphosphate to cyclic pyranopterin monophosphate (cPMP). This Bacillus cereus (strain G9842) protein is Cyclic pyranopterin monophosphate synthase.